The following is a 202-amino-acid chain: Histone chaperone ASF1B (202 aa).

The tract at residues 1-156 (MAKVSVLNVA…TRFHINWDNN (156 aa)) is interaction with histone H3 and CHAF1B. Serine 198 is subject to Phosphoserine; by TLK2.

Belongs to the ASF1 family. As to quaternary structure, interacts with histone H3 (via C-terminus), including histone H3.1, H3.2 and H3.3, and histone H4; the interaction with H3 is direct. Interacts with the CHAF1A, CHAF1B and RBBP4 subunits of the CAF-1 complex. Interacts with HAT1, NASP and TAF1. Found in a soluble complex with NASP and histones H3 and H4; the interaction with NASP is probably indirect and mediated by H3-H4. Interacts with CDAN1. Found in a cytosolic complex with CDAN1, ASF1A, IPO4 and histones H3.1 and H4. Interacts with CREBBP. Phosphorylated by TLK1 and TLK2.

The protein localises to the nucleus. It is found in the cytoplasm. Its subcellular location is the cytosol. In terms of biological role, histone chaperone that facilitates histone deposition and histone exchange and removal during nucleosome assembly and disassembly. Cooperates with chromatin assembly factor 1 (CAF-1) to promote replication-dependent chromatin assembly. Also involved in the nuclear import of the histone H3-H4 dimer together with importin-4 (IPO4): specifically recognizes and binds newly synthesized histones with the monomethylation of H3 'Lys-9' (H3K9me1) and diacetylation at 'Lys-5' and 'Lys-12' of H4 (H4K5ac and H4K12ac) marks in the cytosol. Does not participate in replication-independent nucleosome deposition which is mediated by ASF1A and HIRA. Required for gonad development. The chain is Histone chaperone ASF1B (ASF1B) from Bos taurus (Bovine).